The chain runs to 186 residues: Elongation factor P (186 aa).

The protein belongs to the elongation factor P family.

The protein localises to the cytoplasm. It participates in protein biosynthesis; polypeptide chain elongation. Its function is as follows. Involved in peptide bond synthesis. Stimulates efficient translation and peptide-bond synthesis on native or reconstituted 70S ribosomes in vitro. Probably functions indirectly by altering the affinity of the ribosome for aminoacyl-tRNA, thus increasing their reactivity as acceptors for peptidyl transferase. This Prochlorococcus marinus (strain MIT 9312) protein is Elongation factor P.